Here is a 142-residue protein sequence, read N- to C-terminus: Large ribosomal subunit protein uL13 (142 aa).

This sequence belongs to the universal ribosomal protein uL13 family. As to quaternary structure, part of the 50S ribosomal subunit.

Its function is as follows. This protein is one of the early assembly proteins of the 50S ribosomal subunit, although it is not seen to bind rRNA by itself. It is important during the early stages of 50S assembly. This chain is Large ribosomal subunit protein uL13, found in Shigella boydii serotype 18 (strain CDC 3083-94 / BS512).